The primary structure comprises 594 residues: MVGVPGAAAFQLGCEKRVPAMPGSPVEVKIQSRSSPPIMPPLPPINPGGPRPVSFTPTALSNGINHSPPTLNGAPSPPQRFSNGPASSTSSALTNQQLPATCGARQLSKLKRFLTTLQQFGNDISPEIGEKVRTLVLALVNSTVTIEEFHCKLQEATNFPLRPFVIPFLKANLPLLQRELLHCARAAKQTPSQYLAQHEHLLLNTSIASPADSSELLMEVHGNGKRPSPERRDENNFERDTVPPEPPAKRVCTISPAPRHSPALTVPLMNPGGQFHPTPPPLQHYTLEDIATSHLYREPNKMLEHREVRERHHNLSLNGGYQDELVDHRLTEREWADEWKHLDHALNCIMEMVEKTRRSMAVLRRCQESDREELNYWKRRFNENTELRKTGTELVSRQHSPGSTDSLSNDSQREFTSRPATGYVPVEFWKKTEEAVNKVKIQAMSEVQKAVAEAEQKAFEVIATERARMEQTIADVKRQAAEDAFLVINEQEESTENCWNCGRKASETCSGCNIARYCGSFCQHKDWERHHRLCGQSLHGHSPHSQSRPLLPGGRGSARSADCSVPSPALDKTSATTSRSSTPASVTAIDANGL.

Ser-24 carries the phosphoserine modification. Residue Lys-29 forms a Glycyl lysine isopeptide (Lys-Gly) (interchain with G-Cter in SUMO2) linkage. The interval 48–96 is disordered; it reads GGPRPVSFTPTALSNGINHSPPTLNGAPSPPQRFSNGPASSTSSALTNQ. Composition is skewed to polar residues over residues 55–70 and 79–96; these read FTPT…SPPT and QRFS…LTNQ. An interaction with PRDM14 region spans residues 98-206; sequence LPATCGARQL…QHEHLLLNTS (109 aa). In terms of domain architecture, TAFH spans 104-199; the sequence is ARQLSKLKRF…TPSQYLAQHE (96 aa). The segment at 220 to 257 is disordered; it reads VHGNGKRPSPERRDENNFERDTVPPEPPAKRVCTISPA. Residues 227–242 show a composition bias toward basic and acidic residues; that stretch reads PSPERRDENNFERDTV. A Phosphoserine modification is found at Ser-255. The nervy homology region 2 (NHR2) stretch occupies residues 322 to 368; the sequence is QDELVDHRLTEREWADEWKHLDHALNCIMEMVEKTRRSMAVLRRCQE. Residues 388 to 416 are disordered; that stretch reads RKTGTELVSRQHSPGSTDSLSNDSQREFT. A compositionally biased stretch (polar residues) spans 393–410; the sequence is ELVSRQHSPGSTDSLSND. Phosphoserine is present on Ser-400. The tract at residues 426–475 is nervy homology region 3 (NHR3); that stretch reads VEFWKKTEEAVNKVKIQAMSEVQKAVAEAEQKAFEVIATERARMEQTIAD. A Glycyl lysine isopeptide (Lys-Gly) (interchain with G-Cter in SUMO2) cross-link involves residue Lys-440. Residues 442 to 482 are a coiled coil; sequence QAMSEVQKAVAEAEQKAFEVIATERARMEQTIADVKRQAAE. Cys-498, Cys-501, Cys-509, Cys-512, Cys-518, Cys-522, His-530, and Cys-534 together coordinate Zn(2+). The MYND-type zinc finger occupies 498–534; sequence CWNCGRKASETCSGCNIARYCGSFCQHKDWERHHRLC. Residues 538-594 form a disordered region; the sequence is LHGHSPHSQSRPLLPGGRGSARSADCSVPSPALDKTSATTSRSSTPASVTAIDANGL. Ser-567 carries the phosphoserine modification. Low complexity predominate over residues 573–588; the sequence is TSATTSRSSTPASVTA.

The protein belongs to the CBFA2T family. In terms of assembly, homooligomer. Homotetramerization is mediated by the NHR2 domain. Interacts with CBFA2T3/MTG16. Can interact with RUNX1T1/CBFA2T1. Heterotetramerization between members of the CBFA2T family is proposed. Interacts with RBP, GFI1, TCF4, PRDM14. Interacts with TAL1 and CBFA2T3/MTG16; the heteromer with CBFA2T3/MTG16 may function in repression of TAL1. As to expression, expressed in embryonic stem cells.

The protein resides in the nucleus. In terms of biological role, transcriptional corepressor which facilitates transcriptional repression via its association with DNA-binding transcription factors and recruitment of other corepressors and histone-modifying enzymes. Via association with PRDM14 is involved in regulation of embryonic stem cell (ESC) pluripotency. Involved in primordial germ cell (PCG) formation. Stabilizes PRDM14 and OCT4 on chromatin in a homooligomerization-dependent mannerCan repress the expression of MMP7 in a ZBTB33-dependent manner. Through heteromerization with CBFA2T3/MTG16 may be involved in regulation of the proliferation and the differentiation of erythroid progenitors by repressing the expression of TAL1 target genes. Required for the maintenance of the secretory cell lineage in the small intestine. Can inhibit Notch signaling probably by association with RBPJ and may be involved in GFI1-mediated Paneth cell differentiation. The protein is Protein CBFA2T2 (Cbfa2t2) of Mus musculus (Mouse).